Reading from the N-terminus, the 180-residue chain is Fucolectin-2 (180 aa).

Residues 1–22 (MKVKMIMLLFQILAILTLKSDS) form the signal peptide. An F5/8 type C-like region spans residues 31-179 (QENVALRGRA…VEVNVLFPAP (149 aa)). Asparagine 58, aspartate 61, asparagine 63, and serine 72 together coordinate Ca(2+). 3 disulfide bridges follow: cysteine 73-cysteine 168, cysteine 104-cysteine 105, and cysteine 130-cysteine 146. Positions 75 and 101 each coordinate alpha-L-fucose. The Cell attachment site motif lies at 101–103 (RGD). Alpha-L-fucose is bound at residue arginine 108. Residues cysteine 168 and glutamate 169 each contribute to the Ca(2+) site.

This sequence belongs to the fucolectin family. In terms of assembly, homotrimer. In terms of tissue distribution, parenchymal hepatocytes.

It is found in the secreted. It localises to the extracellular space. Its function is as follows. Acts as a defensive agent. Recognizes blood group fucosylated oligosaccharides including A, B, H and Lewis B-type antigens. Does not recognize Lewis A antigen and has low affinity for monovalent haptens. This Anguilla japonica (Japanese eel) protein is Fucolectin-2.